A 335-amino-acid polypeptide reads, in one-letter code: Probable cytosolic iron-sulfur protein assembly protein Ciao1 (335 aa).

7 WD repeats span residues 12–51, 57–96, 101–140, 146–185, 192–231, 250–289, and 301–335; these read GHKGRIWGVAWHPKGNVFASCGEDKAIRIWSLTGNTWSTK, GHKRTIREIRWSPCGQYLASASFDATTAIWSKSSGEFECN, GHENEVKSVSWSRSGGLLATCSRDKSVWIWEVAGDDEFEC, PHTQDVKRVVWHPTKDILASASYDNTIKMFAEEPIDNDWD, SHTSTVWGIDFDADGERLVSCSDDTTIKIWRAYHPGNTAG, QHSRAIYDVSWCKLTGLIATACGDDGIRIFKESSDSKPDE, and AHDQDVNSVQWNPVVAGQLISCSDDGTIKIWKVTE.

This sequence belongs to the WD repeat CIA1 family. Conjugated to URM1, a ubiquitin-like protein.

In terms of biological role, essential component of the cytosolic iron-sulfur (Fe/S) protein assembly machinery. Required for the maturation of extramitochondrial Fe/S proteins. In Drosophila melanogaster (Fruit fly), this protein is Probable cytosolic iron-sulfur protein assembly protein Ciao1.